Reading from the N-terminus, the 483-residue chain is 6-phosphogluconate dehydrogenase, decarboxylating (483 aa).

NADP(+) is bound by residues 10 to 15 and 33 to 35; these read GLAVMG and NRT. K38 bears the N6-acetyllysine mark. S57 bears the Phosphoserine mark. K59 carries the N6-acetyllysine modification. Residues 75–77 and N103 contribute to the NADP(+) site; that span reads VKA. Substrate-binding positions include N103 and 129-131; that span reads SGG. A Phosphoserine modification is found at S129. The active-site Proton acceptor is the K184. 187-188 provides a ligand contact to substrate; the sequence is HN. E191 acts as the Proton donor in catalysis. Residues Y192, K261, and R288 each coordinate substrate. N6-acetyllysine is present on K309. Positions 447 and 453 each coordinate substrate. 478–481 contacts NADP(+); that stretch reads SSSY.

This sequence belongs to the 6-phosphogluconate dehydrogenase family. Homodimer.

The protein resides in the cytoplasm. The catalysed reaction is 6-phospho-D-gluconate + NADP(+) = D-ribulose 5-phosphate + CO2 + NADPH. The protein operates within carbohydrate degradation; pentose phosphate pathway; D-ribulose 5-phosphate from D-glucose 6-phosphate (oxidative stage): step 3/3. Catalyzes the oxidative decarboxylation of 6-phosphogluconate to ribulose 5-phosphate and CO(2), with concomitant reduction of NADP to NADPH. The protein is 6-phosphogluconate dehydrogenase, decarboxylating (PGD) of Homo sapiens (Human).